The chain runs to 409 residues: Failed axon connections homolog (409 aa).

Residues 68 to 88 form a helical membrane-spanning segment; the sequence is YLTGGALLAAAAYLLHELLVI. A disordered region spans residues 372–409; that stretch reads DEGAENSFSRTPDTDFTGHSLFDSDVDMDDYTDHEQCK.

Belongs to the FAX family.

Its subcellular location is the membrane. May play a role in axonal development. This is Failed axon connections homolog (FAXC) from Homo sapiens (Human).